The primary structure comprises 169 residues: ATP synthase subunit b (169 aa).

A helical transmembrane segment spans residues 11-31; the sequence is IPSFIAQIVNFGLLLGLLYLF.

It belongs to the ATPase B chain family. In terms of assembly, F-type ATPases have 2 components, F(1) - the catalytic core - and F(0) - the membrane proton channel. F(1) has five subunits: alpha(3), beta(3), gamma(1), delta(1), epsilon(1). F(0) has three main subunits: a(1), b(2) and c(10-14). The alpha and beta chains form an alternating ring which encloses part of the gamma chain. F(1) is attached to F(0) by a central stalk formed by the gamma and epsilon chains, while a peripheral stalk is formed by the delta and b chains.

It localises to the cell membrane. Its function is as follows. F(1)F(0) ATP synthase produces ATP from ADP in the presence of a proton or sodium gradient. F-type ATPases consist of two structural domains, F(1) containing the extramembraneous catalytic core and F(0) containing the membrane proton channel, linked together by a central stalk and a peripheral stalk. During catalysis, ATP synthesis in the catalytic domain of F(1) is coupled via a rotary mechanism of the central stalk subunits to proton translocation. Functionally, component of the F(0) channel, it forms part of the peripheral stalk, linking F(1) to F(0). The chain is ATP synthase subunit b from Dehalococcoides mccartyi (strain ATCC BAA-2100 / JCM 16839 / KCTC 5957 / BAV1).